Consider the following 551-residue polypeptide: Intestinal-type alkaline phosphatase 2 (551 aa).

The first 19 residues, 1-19 (MQGAWVLLLLGFRLQLSLS), serve as a signal peptide directing secretion. Mg(2+) is bound at residue D61. Zn(2+) is bound by residues D61 and S111. Catalysis depends on S111, which acts as the Phosphoserine intermediate. Cysteines 140 and 202 form a disulfide. N-linked (GlcNAc...) asparagine glycosylation occurs at N141. S174 serves as a coordination point for Mg(2+). E235 is a binding site for Ca(2+). N-linked (GlcNAc...) asparagine glycosylation is present at N241. Ca(2+)-binding residues include F288, E289, and D304. E330 contributes to the Mg(2+) binding site. Zn(2+) is bound by residues D335, H339, D376, and H377. Residue N426 is glycosylated (N-linked (GlcNAc...) asparagine). Cysteines 485 and 492 form a disulfide. The segment at 496-537 (PPADENRPTTPVQNSTTTTTTTTTTTTTTTTTRVQNSASSLG) is disordered. A glycan (N-linked (GlcNAc...) asparagine) is linked at N509. Residues 511 to 527 (TTTTTTTTTTTTTTTTT) are compositionally biased toward low complexity. A compositionally biased stretch (polar residues) spans 528 to 537 (RVQNSASSLG). Residue N531 is the site of GPI-anchor amidated asparagine attachment. Residues 532–551 (SASSLGPATAPLAWHYWPRR) constitute a propeptide, removed in mature form.

The protein belongs to the alkaline phosphatase family. Homodimer. Requires Mg(2+) as cofactor. Zn(2+) serves as cofactor. It depends on Ca(2+) as a cofactor.

The protein resides in the cell membrane. The enzyme catalyses a phosphate monoester + H2O = an alcohol + phosphate. Its function is as follows. Alkaline phosphatase that can hydrolyze various phosphate compounds. The sequence is that of Intestinal-type alkaline phosphatase 2 from Rattus norvegicus (Rat).